The primary structure comprises 371 residues: DNA repair protein RAD14 (371 aa).

Positions 26 to 48 are disordered; that stretch reads LSSDQLNRIESRNEPLKTRPLAV. The segment covering 32–42 has biased composition (basic and acidic residues); that stretch reads NRIESRNEPLK. Positions 191, 194, 213, and 216 each coordinate Zn(2+). Residues 191–216 fold into a zinc finger; it reads CIECHINIEMDPVLHDVFKLQVCKQC.

Belongs to the XPA family. As to quaternary structure, two monomers bind to kinked/damaged DNA (construct with only the C-terminal DNA-binding domain). Component of the nucleotide excision repair factor 1 (NEF1) complex consisting of RAD1, RAD10 and RAD14.

Its subcellular location is the nucleus. Functionally, involved in nucleotide excision repair. Binds specifically to damaged DNA. Required for the incision step. This is DNA repair protein RAD14 (RAD14) from Saccharomyces cerevisiae (strain ATCC 204508 / S288c) (Baker's yeast).